Here is a 336-residue protein sequence, read N- to C-terminus: Phospho-N-acetylmuramoyl-pentapeptide-transferase (336 aa).

Transmembrane regions (helical) follow at residues 3–23 (LTLIAAIISFMVSAFTMPYFI), 53–73 (GGTVFLLVATAVSLLVSLFSI), 78–98 (SLALISGILSIVVIYGIIGFL), 118–138 (LALQLAGGLMFYFLHVSPSGI), 143–163 (VFGYQLSLGIFYLFFVLFWVV), 174–194 (GIDGLASISVVISLVTYGVIA), 200–220 (FDVLLLIGTMIGALLGFFCFN), 226–246 (VFMGDVGSLALGAMLAAISIA), 251–271 (WTLLIIGIVYVLETSSVMLQV), and 316–336 (AFLWGVGSLASLLVLAILYVF).

It belongs to the glycosyltransferase 4 family. MraY subfamily. Requires Mg(2+) as cofactor.

The protein localises to the cell membrane. The catalysed reaction is UDP-N-acetyl-alpha-D-muramoyl-L-alanyl-gamma-D-glutamyl-L-lysyl-D-alanyl-D-alanine + di-trans,octa-cis-undecaprenyl phosphate = Mur2Ac(oyl-L-Ala-gamma-D-Glu-L-Lys-D-Ala-D-Ala)-di-trans,octa-cis-undecaprenyl diphosphate + UMP. The protein operates within cell wall biogenesis; peptidoglycan biosynthesis. Its function is as follows. Catalyzes the initial step of the lipid cycle reactions in the biosynthesis of the cell wall peptidoglycan: transfers peptidoglycan precursor phospho-MurNAc-pentapeptide from UDP-MurNAc-pentapeptide onto the lipid carrier undecaprenyl phosphate, yielding undecaprenyl-pyrophosphoryl-MurNAc-pentapeptide, known as lipid I. This is Phospho-N-acetylmuramoyl-pentapeptide-transferase from Streptococcus pyogenes serotype M4 (strain MGAS10750).